The primary structure comprises 180 residues: Cytochrome b6-f complex subunit 4 (180 aa).

Helical transmembrane passes span L36–V56, L95–E115, and T131–I151.

It belongs to the cytochrome b family. PetD subfamily. The 4 large subunits of the cytochrome b6-f complex are cytochrome b6, subunit IV (17 kDa polypeptide, petD), cytochrome f and the Rieske protein, while the 4 small subunits are petG, petL, petM and petN. The complex functions as a dimer.

It is found in the plastid. The protein localises to the chloroplast thylakoid membrane. Its function is as follows. Component of the cytochrome b6-f complex, which mediates electron transfer between photosystem II (PSII) and photosystem I (PSI), cyclic electron flow around PSI, and state transitions. This is Cytochrome b6-f complex subunit 4 from Pinus thunbergii (Japanese black pine).